A 691-amino-acid chain; its full sequence is Lipase 2 (691 aa).

The first 37 residues, 1–37 (MLRGQEERKYSIRKYSIGVVSVLAATMFVVTSHEAQA), serve as a signal peptide directing secretion. Positions 34 to 267 (EAQASEKIPT…KPTDKNTDNK (234 aa)) are disordered. The propeptide occupies 38–296 (SEKIPTTNAA…ADAKKVRPLK (259 aa)). Residues 41 to 72 (IPTTNAAAQKETLNQPGEQGNAITSHQMQSGK) are compositionally biased toward polar residues. The segment covering 73 to 82 (QLDDMHKENG) has biased composition (basic and acidic residues). 4 stretches are compositionally biased toward polar residues: residues 94 to 115 (LQSS…NDNQ), 125 to 135 (SKQSHQNNATN), 142 to 172 (DQIQ…QPSI), and 186 to 196 (PTSTTPPSNDK). Composition is skewed to basic and acidic residues over residues 197 to 214 (TAPK…KHPN) and 258 to 267 (KPTDKNTDNK). Serine 413 serves as the catalytic Nucleophile. Residue glycine 580 coordinates Ca(2+). Catalysis depends on aspartate 604, which acts as the Charge relay system. Position 645 (aspartate 645) interacts with Ca(2+). The Charge relay system role is filled by histidine 646. Aspartate 648, aspartate 653, and aspartate 656 together coordinate Ca(2+).

It belongs to the AB hydrolase superfamily. Lipase family.

It is found in the secreted. It catalyses the reaction a triacylglycerol + H2O = a diacylglycerol + a fatty acid + H(+). The polypeptide is Lipase 2 (lip2) (Staphylococcus aureus (strain MRSA252)).